The chain runs to 249 residues: Glucosamine-6-phosphate deaminase 2 (249 aa).

D67 acts as the Proton acceptor; for enolization step in catalysis. N136 serves as the catalytic For ring-opening step. The active-site Proton acceptor; for ring-opening step is H138. The active-site For ring-opening step is the E143.

It belongs to the glucosamine/galactosamine-6-phosphate isomerase family. NagB subfamily.

The enzyme catalyses alpha-D-glucosamine 6-phosphate + H2O = beta-D-fructose 6-phosphate + NH4(+). It functions in the pathway amino-sugar metabolism; N-acetylneuraminate degradation; D-fructose 6-phosphate from N-acetylneuraminate: step 5/5. Catalyzes the reversible isomerization-deamination of glucosamine 6-phosphate (GlcN6P) to form fructose 6-phosphate (Fru6P) and ammonium ion. Required for growth on glucosamine and also provides the majority of GlcN6P deaminase activity during growth on N-acetylglucosamine (GlcNAc). This Bacillus subtilis (strain 168) protein is Glucosamine-6-phosphate deaminase 2.